The chain runs to 2194 residues: PDZ and LIM domain protein Zasp (2194 aa).

The 83-residue stretch at 8–90 folds into the PDZ domain; the sequence is QIKLSRFDAQ…NFVITVQRGG (83 aa). Residues 211–277 form a disordered region; sequence TGQSTPAFGN…KPPSTGGLPT (67 aa). Residues 228–253 are compositionally biased toward low complexity; the sequence is PQQLQQPQQQYNQHQQHYHQQQQQQQ. Residues 280 to 339 enclose the LIM zinc-binding 1 domain; sequence NICTECERLITGVFVRIKDKNLHVECFKCATCGTSLKNQGYYNFNNKLYCDIHAKQAAIN. The span at 415 to 435 shows a compositional bias: low complexity; the sequence is AATPQAATATDSPAATASSSD. Disordered regions lie at residues 415-436, 457-476, 511-558, 580-611, 623-692, 896-940, 1223-1260, 1297-1322, 1550-1632, 1646-1738, and 1815-1837; these read AATPQAATATDSPAATASSSDN, VALAPPPPQPPTAGGGDQPF, GAAA…AVEE, SRQSQRGSSFTWPPPQDDSHLAPTAAPLYIPP, VQQV…TTSE, AAAA…PRGS, LTQKSQQQPPQANQQQQQQQQQRGTQQQQHSQVTQRTQ, QSQSSASYSSKATACSNSSSTVPPAN, LNAS…QQPE, QREQ…YGKT, and APPPGFLQQQQQQQQRSAFSGYQ. Low complexity predominate over residues 515–530; that stretch reads PKSPVSYPPQQQQQSP. 2 stretches are compositionally biased toward polar residues: residues 580–590 and 644–667; these read SRQSQRGSSFT and VGTSANGAPQWQSYSAPQLTTASA. The segment covering 676-692 has biased composition (low complexity); it reads SSDSYTSTSTTTTTTSE. Positions 1598 to 1610 are enriched in polar residues; sequence QTGSITTGQSYQG. Composition is skewed to low complexity over residues 1616 to 1630, 1646 to 1668, and 1699 to 1727; these read SEQSSQSASQSYNQQ, QREQSSQLQQQAQSQTQSQTRSQ, and SQSVSQSKAQSQSISQAQTQAQSQSQNQS. LIM zinc-binding domains lie at 2018 to 2078, 2079 to 2138, and 2139 to 2194; these read PLCN…KYLA, PTCS…LFTT, and KCFA…NHAR.

Interacts with alpha-actinin (Actn). As to expression, expression is first detected in the proctodeum and the midgut primordium. In stage 11 embryos, expression is predominant in the leading edge of epidermal cells adjacent to the amnioserosa. Stage 12 embryos exhibit expression in the midgut and the leading edge. Expressed in several rows of germ band cells next to the leading edge at stage 14. Strong expression is visible in the midgut and pharyngeal muscles of stage 17 embryos. Also expressed in somatic muscles and visceral mesoderm. Colocalizes with mys (beta PS integrin) in myotendinous junctions and with Actn in muscle Z lines.

It localises to the cytoplasm. The protein localises to the cytoskeleton. Regulator of cell matrix adhesion having two related functions, one upstream of Actn organizing the Z line and the other downstream of integrins regulating assembly of integrin adhesion sites. Also required for the formation of myotendinous junctions in muscles. The sequence is that of PDZ and LIM domain protein Zasp (Zasp52) from Drosophila melanogaster (Fruit fly).